A 116-amino-acid polypeptide reads, in one-letter code: Venom nerve growth factor (116 aa).

3 cysteine pairs are disulfide-bonded: Cys14–Cys78, Cys56–Cys106, and Cys66–Cys108.

Belongs to the NGF-beta family. In terms of assembly, homodimer; non-covalently linked. Not glycosylated. As to expression, expressed by the venom gland.

Its subcellular location is the secreted. Nerve growth factor is important for the development and maintenance of the sympathetic and sensory nervous systems. It stimulates division and differentiation of sympathetic and embryonic sensory neurons as well as basal forebrain cholinergic neurons in the brain. Its relevance in the snake venom is not clear. However, it has been shown to inhibit metalloproteinase-dependent proteolysis of platelet glycoprotein Ib alpha, suggesting a metalloproteinase inhibition to prevent metalloprotease autodigestion and/or protection against prey proteases. Binds a lipid between the two protein chains in the homodimer. The lipid-bound form promotes histamine relase from mouse mast cells, contrary to the lipid-free form. This chain is Venom nerve growth factor, found in Naja naja (Indian cobra).